The following is a 765-amino-acid chain: Probable dipeptidyl peptidase 4 (765 aa).

A signal peptide spans 1–14; that stretch reads MKWSILLLVGCAAA. 8 N-linked (GlcNAc...) asparagine glycosylation sites follow: N35, N78, N101, N110, N169, N218, N465, and N490. S613 serves as the catalytic Charge relay system. The N-linked (GlcNAc...) asparagine glycan is linked to N665. Residues D690 and H725 each act as charge relay system in the active site.

Belongs to the peptidase S9B family.

It is found in the secreted. The catalysed reaction is Release of an N-terminal dipeptide, Xaa-Yaa-|-Zaa-, from a polypeptide, preferentially when Yaa is Pro, provided Zaa is neither Pro nor hydroxyproline.. Its function is as follows. Extracellular dipeptidyl-peptidase which removes N-terminal dipeptides sequentially from polypeptides having unsubstituted N-termini provided that the penultimate residue is proline. Contributes to pathogenicity. This Aspergillus fumigatus (strain CBS 144.89 / FGSC A1163 / CEA10) (Neosartorya fumigata) protein is Probable dipeptidyl peptidase 4 (dpp4).